The following is a 107-amino-acid chain: Nucleoid-associated protein GOX0603 (107 aa).

It belongs to the YbaB/EbfC family. In terms of assembly, homodimer.

The protein resides in the cytoplasm. Its subcellular location is the nucleoid. Binds to DNA and alters its conformation. May be involved in regulation of gene expression, nucleoid organization and DNA protection. This Gluconobacter oxydans (strain 621H) (Gluconobacter suboxydans) protein is Nucleoid-associated protein GOX0603.